Here is a 78-residue protein sequence, read N- to C-terminus: ATP synthase subunit c (78 aa).

A run of 2 helical transmembrane segments spans residues 11 to 31 (FIGAGLAAIGSGAAAIGVGHV) and 53 to 73 (LFIGIAFAEALGIFAFLVALL).

This sequence belongs to the ATPase C chain family. In terms of assembly, F-type ATPases have 2 components, F(1) - the catalytic core - and F(0) - the membrane proton channel. F(1) has five subunits: alpha(3), beta(3), gamma(1), delta(1), epsilon(1). F(0) has four main subunits: a(1), b(1), b'(1) and c(10-14). The alpha and beta chains form an alternating ring which encloses part of the gamma chain. F(1) is attached to F(0) by a central stalk formed by the gamma and epsilon chains, while a peripheral stalk is formed by the delta, b and b' chains.

Its subcellular location is the cell inner membrane. Functionally, f(1)F(0) ATP synthase produces ATP from ADP in the presence of a proton or sodium gradient. F-type ATPases consist of two structural domains, F(1) containing the extramembraneous catalytic core and F(0) containing the membrane proton channel, linked together by a central stalk and a peripheral stalk. During catalysis, ATP synthesis in the catalytic domain of F(1) is coupled via a rotary mechanism of the central stalk subunits to proton translocation. Its function is as follows. Key component of the F(0) channel; it plays a direct role in translocation across the membrane. A homomeric c-ring of between 10-14 subunits forms the central stalk rotor element with the F(1) delta and epsilon subunits. The sequence is that of ATP synthase subunit c from Jannaschia sp. (strain CCS1).